Consider the following 352-residue polypeptide: Protein Wnt-3a (352 aa).

Residues Met1–Gly18 form the signal peptide. Cystine bridges form between Cys77–Cys88, Cys128–Cys136, Cys138–Cys155, Cys203–Cys217, Cys205–Cys212, Cys281–Cys312, Cys297–Cys307, Cys311–Cys351, Cys327–Cys342, Cys329–Cys339, and Cys334–Cys335. Asn87 carries N-linked (GlcNAc...) asparagine glycosylation. A lipid anchor (O-palmitoleoyl serine; by PORCN) is attached at Ser209. N-linked (GlcNAc...) asparagine glycosylation is present at Asn298.

It belongs to the Wnt family. As to quaternary structure, forms a soluble 1:1 complex with AFM; this prevents oligomerization and is required for prolonged biological activity. The complex with AFM may represent the physiological form in body fluids. Homooligomer; disulfide-linked, leading to inactivation. Interacts with APCDD1 and WLS. Component of the Wnt-Fzd-LRP5-LRP6 signaling complex that contains a WNT protein, a FZD protein and LRP5 or LRP6. Interacts directly in the complex with LRP6. Interacts with PORCN. Interacts with glypican GPC3. Interacts with PKD1 (via extracellular domain). Interacts with FZD5. Post-translationally, proteolytic processing by TIKI1 and TIKI2 promotes oxidation and formation of large disulfide-bond oligomers, leading to inactivation of WNT3A. Disulfide bonds have critical and distinct roles in secretion and activity. Loss of each conserved cysteine in WNT3A results in high molecular weight oxidized Wnt oligomers, which are formed through inter-Wnt disulfide bonding. In terms of processing, palmitoleoylation by PORCN is required for efficient binding to frizzled receptors. Palmitoleoylation is required for proper trafficking to cell surface, vacuolar acidification is critical to release palmitoleoylated WNT3A from WLS in secretory vesicles. Depalmitoleoylated by NOTUM, leading to inhibit Wnt signaling pathway, possibly by promoting disulfide bond formation and oligomerization. Dorsal portion of the neural tube (developing roof plate), and mesenchyme tissue surrounding the umbilical veins.

The protein localises to the secreted. It localises to the extracellular space. The protein resides in the extracellular matrix. Ligand for members of the frizzled family of seven transmembrane receptors. Functions in the canonical Wnt signaling pathway that results in activation of transcription factors of the TCF/LEF family. Required for normal embryonic mesoderm development and formation of caudal somites. Required for normal morphogenesis of the developing neural tube. Mediates self-renewal of the stem cells at the bottom on intestinal crypts (in vitro). The protein is Protein Wnt-3a (Wnt3a) of Mus musculus (Mouse).